The chain runs to 161 residues: Long arms of the bivalent protein 1 (161 aa).

The short motif at 72-75 is the PP1 binding motif element; it reads KVIW. Positions 85–161 are disordered; that stretch reads GTMFEDFKED…SDKTMCSGQS (77 aa). Positions 97–115 are enriched in polar residues; the sequence is QESVSSISNNEANWGSSVN. Basic and acidic residues predominate over residues 120-129; the sequence is NYEKMQKEET. Acidic residues predominate over residues 130-151; the sequence is FDPYDSDSDTSEDSDFDEDFED.

In terms of assembly, interacts with gsp-1 and gsp-2; the interaction is direct.

It localises to the chromosome. It is found in the nucleus. Its function is as follows. Involved in sister chromatid cohesion during mitosis and meiosis. In association with the gsp-2 phosphatase, it both restricts the localization and antagonizes the function of the air-2 kinase during meiosis I and mitosis to promote chromatid cohesion and spindle attachment. This in turn, drives germ cell immortality. Furthermore, may play a role in ensuring the timely assembly of the synaptonemal complex during prophase I of meiosis. In Caenorhabditis elegans, this protein is Long arms of the bivalent protein 1.